We begin with the raw amino-acid sequence, 403 residues long: Creatinase (403 aa).

Residue histidine 232 is part of the active site.

This sequence belongs to the peptidase M24 family. Creatinase subfamily. As to quaternary structure, homodimer.

It carries out the reaction creatine + H2O = sarcosine + urea. This is Creatinase from Pseudomonas putida (Arthrobacter siderocapsulatus).